The following is a 644-amino-acid chain: DNA mismatch repair protein MutL (644 aa).

2 disordered regions span residues Ser353 to Thr399 and Gly420 to Ala440. Polar residues predominate over residues Ser370–Glu381. Residues Ser383 to Thr399 show a composition bias toward basic and acidic residues.

Belongs to the DNA mismatch repair MutL/HexB family.

In terms of biological role, this protein is involved in the repair of mismatches in DNA. It is required for dam-dependent methyl-directed DNA mismatch repair. May act as a 'molecular matchmaker', a protein that promotes the formation of a stable complex between two or more DNA-binding proteins in an ATP-dependent manner without itself being part of a final effector complex. This chain is DNA mismatch repair protein MutL, found in Shewanella sp. (strain MR-4).